Here is a 307-residue protein sequence, read N- to C-terminus: N-acetylmuramic acid 6-phosphate etherase (307 aa).

One can recognise an SIS domain in the interval 59-222; it reads TTKALSQGGK…STGVMVRLGK (164 aa). Glu87 (proton donor) is an active-site residue. Residue Glu118 is part of the active site.

Belongs to the GCKR-like family. MurNAc-6-P etherase subfamily. In terms of assembly, homodimer.

It catalyses the reaction N-acetyl-D-muramate 6-phosphate + H2O = N-acetyl-D-glucosamine 6-phosphate + (R)-lactate. Its pathway is amino-sugar metabolism; N-acetylmuramate degradation. Its function is as follows. Specifically catalyzes the cleavage of the D-lactyl ether substituent of MurNAc 6-phosphate, producing GlcNAc 6-phosphate and D-lactate. The protein is N-acetylmuramic acid 6-phosphate etherase of Trichodesmium erythraeum (strain IMS101).